The sequence spans 397 residues: Cathepsin E-A (397 aa).

An N-terminal signal peptide occupies residues 1–16 (MRQILVLLLFATLVYG). Residues 17 to 52 (LIRVPLKRQKSIRKTLKEKGKLSHIWTQQGIDMVQY) constitute a propeptide, activation peptide. Residues 74 to 385 (YFGEISVGTP…DRGNNRVGLA (312 aa)) enclose the Peptidase A1 domain. The N-linked (GlcNAc...) asparagine glycan is linked to asparagine 86. Residue aspartate 92 is part of the active site. Cysteine 105 and cysteine 110 are joined by a disulfide. N-linked (GlcNAc...) asparagine glycosylation is present at asparagine 130. Cysteine 268 and cysteine 272 are joined by a disulfide. Aspartate 277 is a catalytic residue. A disulfide bridge connects residues cysteine 310 and cysteine 344.

Belongs to the peptidase A1 family. Homodimer; disulfide-linked. Glycosylated. Contains high mannose-type oligosaccharide. As to expression, expressed predominantly in the larval foregut and the anterior and posterior adult stomach.

The protein resides in the endosome. It carries out the reaction Similar to cathepsin D, but slightly broader specificity.. Its function is as follows. May have a role in immune function. Probably involved in the processing of antigenic peptides during MHC class II-mediated antigen presentation. This is Cathepsin E-A (ctse-a) from Xenopus laevis (African clawed frog).